Consider the following 189-residue polypeptide: Stathmin-4 (189 aa).

S-palmitoyl cysteine attachment occurs at residues Cys20 and Cys22. In terms of domain architecture, SLD spans 48–189 (SDMEVIELNK…NKELKEEASR (142 aa)). A phosphoserine mark is found at Glu54 and Ser90. Residues 90–189 (SLEEIQKKLE…NKELKEEASR (100 aa)) adopt a coiled-coil conformation. Residues 168–189 (QEKDKHAEEVRKNKELKEEASR) form a disordered region.

This sequence belongs to the stathmin family. In terms of tissue distribution, nervous tissue.

It is found in the golgi apparatus. It localises to the cell projection. The protein localises to the growth cone. Its subcellular location is the axon. Its function is as follows. Exhibits microtubule-destabilizing activity. The polypeptide is Stathmin-4 (Stmn4) (Rattus norvegicus (Rat)).